The primary structure comprises 40 residues: Large ribosomal subunit protein bL33c (40 aa).

This sequence belongs to the bacterial ribosomal protein bL33 family.

It localises to the plastid. The protein resides in the chloroplast. The polypeptide is Large ribosomal subunit protein bL33c (rpl33) (Pisum sativum (Garden pea)).